Reading from the N-terminus, the 437-residue chain is MTKMLKFLFKNKINVELSIKQYKLNLRNPFGTAHSVTTTRTNALIEIKVEDIRGFGECGLPPKKPLCYLADYNDIETYFNSWIKEIDEKQKQQQQQQEESYHYDAFNKISQKEYFKELRKEMNGDYQQSVYQFLFECLDNCKENSKDYSYASRCAIEMALLDGWGKFLKQPIYKLINIPESESLKPFYYTISMCPTMEEIMDSTDFGSKYTGFLKIKLDADVEKGMNIIDSVQKRLLNNNSTRTISKISVDANSSWTPSVARKYLEKLSPMADLISMVEQPFPIETLKTVNKDQKIDIQHLNEWVSIKKEYQDKGLLIFADESICTEKDLDGLVQLVHGVNIKLEKTGGIRPGLSTLLKAKELGLKTWIGSMVASSLNVSAAAHLLCSLSDFGGDLDGGLLIDDATQLFENDAFQLLDNGLIKMNSNNYGVGVTLKK.

Lysine 217 (proton acceptor) is an active-site residue. Residues aspartate 251, glutamate 279, and aspartate 321 each contribute to the Mn(2+) site. The active-site Proton donor is aspartate 395.

The protein belongs to the mandelate racemase/muconate lactonizing enzyme family.

The chain is Enolase superfamily member DDB_G0284701 from Dictyostelium discoideum (Social amoeba).